The sequence spans 216 residues: Probable nicotinate-nucleotide adenylyltransferase (216 aa).

This sequence belongs to the NadD family.

The enzyme catalyses nicotinate beta-D-ribonucleotide + ATP + H(+) = deamido-NAD(+) + diphosphate. It functions in the pathway cofactor biosynthesis; NAD(+) biosynthesis; deamido-NAD(+) from nicotinate D-ribonucleotide: step 1/1. In terms of biological role, catalyzes the reversible adenylation of nicotinate mononucleotide (NaMN) to nicotinic acid adenine dinucleotide (NaAD). The polypeptide is Probable nicotinate-nucleotide adenylyltransferase (Pelobacter propionicus (strain DSM 2379 / NBRC 103807 / OttBd1)).